The chain runs to 598 residues: Trichothecene efflux pump TRI12 (598 aa).

The helical transmembrane segment at 42–62 (IVASFAAFSMNVVATYFVLQA) threads the bilayer. The N-linked (GlcNAc...) asparagine glycan is linked to Asn79. The next 2 helical transmembrane spans lie at 109 to 129 (PFVI…CTAT) and 135 to 155 (LAAM…PLFI). N-linked (GlcNAc...) asparagine glycosylation occurs at Asn161. The next 10 membrane-spanning stretches (helical) occupy residues 165–185 (FLGL…SPYL), 197–217 (WIFY…IIWY), 241–261 (WIGI…VSWG), 273–293 (VIGL…YEVY), 312–332 (FVCI…LVIM), 356–376 (ATAS…FHLV), 381–401 (WQIL…SSIN), 409–429 (IALS…TMLL), 442–462 (AFAV…AAFI), and 533–553 (ANVY…SLCM). Positions 579-598 (LEGNSESQPSPIILSMADKE) are disordered.

This sequence belongs to the major facilitator superfamily.

It localises to the cell membrane. In terms of biological role, efflux pump that provides the dual role of trichothecene export and self-protection by allowing the fungus to evade the harmful effect of its own trichothecene production. The sequence is that of Trichothecene efflux pump TRI12 from Fusarium sporotrichioides.